The primary structure comprises 596 residues: Probable ATP-dependent RNA helicase DDX52 (596 aa).

Lys-15 is modified (N6-acetyllysine). A Phosphoserine modification is found at Ser-39. The tract at residues 68-94 (LPDEEKTEESQIERKKQNRKKKKITSE) is disordered. A Q motif motif is present at residues 163 to 191 (QLDQEYKINSRLLQNILDAGFQTPTPIQM). A Helicase ATP-binding domain is found at 194 to 372 (IPVMLHGREL…RLNLDSVITV (179 aa)). 207–214 (APTGSGKT) is a binding site for ATP. Residues 316-319 (DESD) carry the DEAD box motif. One can recognise a Helicase C-terminal domain in the interval 383–544 (TVEQELLFVG…PVPEYIKGFQ (162 aa)). The tract at residues 575 to 596 (AKDKRKKVTGQNKKKVAPEDKS) is disordered. A compositionally biased stretch (basic residues) spans 577–589 (DKRKKVTGQNKKK).

It belongs to the DEAD box helicase family. DDX52/ROK1 subfamily.

Its subcellular location is the nucleus. The protein resides in the nucleolus. It catalyses the reaction ATP + H2O = ADP + phosphate + H(+). The protein is Probable ATP-dependent RNA helicase DDX52 (DDX52) of Bos taurus (Bovine).